The following is a 307-amino-acid chain: MTNDALIAALSHLVSEGRNPDTMDIDLLSSQEIVERLNQQDKQVPLAVEAVLPQIAQAVDKITAAFKQGGRLIYLGAGTSGRLGVLDASECPPTFGVSDQMVIGLIAGGKEAMFTAQEGAEDNATLGAHDLQQIDFSSKDVLVGIAASGRTPYVIGALEYANDLGATTIALSCNPDSPIAEIAQIAISPVVGPEALTGSTRLKSGTAQKLVLNMLTTASMIRLGKSYQNLMVDVRATNRKLIARAVRIVMQATDCQREEAEALLKESHNNAKLAILMHLTGMNYEQATAKLSQSDGFLRRAMEEHEE.

The SIS domain occupies 62-225 (ITAAFKQGGR…TTASMIRLGK (164 aa)). The active-site Proton donor is the glutamate 90. Residue glutamate 121 is part of the active site.

This sequence belongs to the GCKR-like family. MurNAc-6-P etherase subfamily. As to quaternary structure, homodimer.

The catalysed reaction is N-acetyl-D-muramate 6-phosphate + H2O = N-acetyl-D-glucosamine 6-phosphate + (R)-lactate. Its pathway is amino-sugar metabolism; 1,6-anhydro-N-acetylmuramate degradation. The protein operates within amino-sugar metabolism; N-acetylmuramate degradation. It participates in cell wall biogenesis; peptidoglycan recycling. Its function is as follows. Specifically catalyzes the cleavage of the D-lactyl ether substituent of MurNAc 6-phosphate, producing GlcNAc 6-phosphate and D-lactate. Together with AnmK, is also required for the utilization of anhydro-N-acetylmuramic acid (anhMurNAc) either imported from the medium or derived from its own cell wall murein, and thus plays a role in cell wall recycling. The polypeptide is N-acetylmuramic acid 6-phosphate etherase 2 (Vibrio cholerae serotype O1 (strain ATCC 39315 / El Tor Inaba N16961)).